Here is a 203-residue protein sequence, read N- to C-terminus: FMN-dependent NADH:quinone oxidoreductase (203 aa).

Residues serine 9, 15 to 17, and 138 to 141 contribute to the FMN site; these read SVS and SRGG.

It belongs to the azoreductase type 1 family. In terms of assembly, homodimer. FMN is required as a cofactor.

The catalysed reaction is 2 a quinone + NADH + H(+) = 2 a 1,4-benzosemiquinone + NAD(+). It catalyses the reaction N,N-dimethyl-1,4-phenylenediamine + anthranilate + 2 NAD(+) = 2-(4-dimethylaminophenyl)diazenylbenzoate + 2 NADH + 2 H(+). Its function is as follows. Quinone reductase that provides resistance to thiol-specific stress caused by electrophilic quinones. Functionally, also exhibits azoreductase activity. Catalyzes the reductive cleavage of the azo bond in aromatic azo compounds to the corresponding amines. The chain is FMN-dependent NADH:quinone oxidoreductase from Methylorubrum extorquens (strain CM4 / NCIMB 13688) (Methylobacterium extorquens).